The following is a 973-amino-acid chain: Vacuolar protein sorting-associated protein 18 homolog (973 aa).

Alanine 2 bears the N-acetylalanine mark. Phosphoserine occurs at positions 3, 11, and 13. At lysine 362 the chain carries N6-acetyllysine. Residues 454–481 are a coiled coil; that stretch reads EEIALKFLEARQEEALAEFLQRKLASLK. Residues 618–772 form a CHCR repeat; the sequence is GSRLDARQLI…VVQEEEDVQT (155 aa). The residue at position 689 (serine 689) is a Phosphoserine. Positions 802–848 form a coiled coil; that stretch reads KEAICSSLKAYNHHIQELQREMEEATASAQRIRRDLQELRGRYGTVE. Residues 853 to 947 form an RING-type zinc finger; it reads CATCDFPLLN…ELVAAECVYC (95 aa). Residues 903–929 are disordered; it reads GAAPPPAKGSARAKEAEGGAATAGPSR. Phosphoserine is present on serine 912.

The protein belongs to the VPS18 family. In terms of assembly, core component of at least two putative endosomal tethering complexes, the homotypic fusion and vacuole protein sorting (HOPS) complex and the class C core vacuole/endosome tethering (CORVET) complex. Their common core is composed of the class C Vps proteins VPS11, VPS16, VPS18 and VPS33A, which in HOPS further associates with VPS39 and VPS41 and in CORVET with VPS8 and TGFBRAP1. Interacts with RAB5C. Interacts with HOOK1. Interacts with STX7, MON1B. Associates with adaptor protein complex 3 (AP-3) and clathrin:AP-3 complexes. Interacts with SYNPO2. Interacts with PLEKHM1. As to expression, ubiquitous. Expression was highest in heart and low in lung.

The protein resides in the late endosome membrane. Its subcellular location is the lysosome membrane. It is found in the early endosome. The protein localises to the cytoplasmic vesicle. It localises to the autophagosome. The protein resides in the clathrin-coated vesicle. Functionally, plays a role in vesicle-mediated protein trafficking to lysosomal compartments including the endocytic membrane transport and autophagic pathways. Believed to act as a core component of the putative HOPS and CORVET endosomal tethering complexes which are proposed to be involved in the Rab5-to-Rab7 endosome conversion probably implicating MON1A/B, and via binding SNAREs and SNARE complexes to mediate tethering and docking events during SNARE-mediated membrane fusion. The HOPS complex is proposed to be recruited to Rab7 on the late endosomal membrane and to regulate late endocytic, phagocytic and autophagic traffic towards lysosomes. The CORVET complex is proposed to function as a Rab5 effector to mediate early endosome fusion probably in specific endosome subpopulations. Required for fusion of endosomes and autophagosomes with lysosomes. Involved in dendrite development of Pukinje cells. This chain is Vacuolar protein sorting-associated protein 18 homolog, found in Homo sapiens (Human).